The following is a 201-amino-acid chain: Riboflavin synthase (201 aa).

Lumazine-binding repeat units lie at residues 1-97 and 98-197; these read MFTG…LGGH and IVQG…ERLM. Residues 4–6, 47–49, 62–67, 101–103, Lys-136, 145–147, and 162–167 each bind 2,4-dihydroxypteridine; these read GIV, CLT, DVMAET, GHV, SLT, and SLIPTT.

Homotrimer.

It carries out the reaction 2 6,7-dimethyl-8-(1-D-ribityl)lumazine + H(+) = 5-amino-6-(D-ribitylamino)uracil + riboflavin. It participates in cofactor biosynthesis; riboflavin biosynthesis; riboflavin from 2-hydroxy-3-oxobutyl phosphate and 5-amino-6-(D-ribitylamino)uracil: step 2/2. Its function is as follows. Catalyzes the dismutation of two molecules of 6,7-dimethyl-8-ribityllumazine, resulting in the formation of riboflavin and 5-amino-6-(D-ribitylamino)uracil. This Mycobacterium bovis (strain ATCC BAA-935 / AF2122/97) protein is Riboflavin synthase (ribE).